A 443-amino-acid polypeptide reads, in one-letter code: Glutamyl-tRNA reductase (443 aa).

Substrate contacts are provided by residues 49–52 (TCNR), Ser-109, 114–116 (ETQ), and Gln-120. Cys-50 functions as the Nucleophile in the catalytic mechanism. 189 to 194 (GAGEMS) serves as a coordination point for NADP(+).

Belongs to the glutamyl-tRNA reductase family. As to quaternary structure, homodimer.

The enzyme catalyses (S)-4-amino-5-oxopentanoate + tRNA(Glu) + NADP(+) = L-glutamyl-tRNA(Glu) + NADPH + H(+). It participates in porphyrin-containing compound metabolism; protoporphyrin-IX biosynthesis; 5-aminolevulinate from L-glutamyl-tRNA(Glu): step 1/2. Its function is as follows. Catalyzes the NADPH-dependent reduction of glutamyl-tRNA(Glu) to glutamate 1-semialdehyde (GSA). This is Glutamyl-tRNA reductase from Desulfitobacterium hafniense (strain DSM 10664 / DCB-2).